The chain runs to 106 residues: COX assembly mitochondrial protein homolog (106 aa).

Alanine 2 bears the N-acetylalanine mark. The region spanning 28-71 (RERCSEQVEDFTRCCKDSGILMVLKCRKENSALKDCLTAYYNDP) is the CHCH domain. 2 consecutive short sequence motifs (cx9C motif) follow at residues 31-41 (CSEQVEDFTRC) and 53-63 (CRKENSALKDC). 2 disulfides stabilise this stretch: cysteine 31–cysteine 63 and cysteine 41–cysteine 53.

This sequence belongs to the CMC family. In terms of assembly, component of the MITRAC (mitochondrial translation regulation assembly intermediate of cytochrome c oxidase complex) complex, the core components of this complex being COA3/MITRAC12 and COX14.

It is found in the mitochondrion. In terms of biological role, component of the MITRAC (mitochondrial translation regulation assembly intermediate of cytochrome c oxidase complex) complex, that regulates cytochrome c oxidase assembly. The polypeptide is COX assembly mitochondrial protein homolog (Cmc1) (Mus musculus (Mouse)).